A 584-amino-acid chain; its full sequence is Arginine--tRNA ligase (584 aa).

The 'HIGH' region signature appears at 127 to 137; it reads PNLAKEMHVGH.

This sequence belongs to the class-I aminoacyl-tRNA synthetase family. As to quaternary structure, monomer.

It is found in the cytoplasm. The catalysed reaction is tRNA(Arg) + L-arginine + ATP = L-arginyl-tRNA(Arg) + AMP + diphosphate. The polypeptide is Arginine--tRNA ligase (Alcanivorax borkumensis (strain ATCC 700651 / DSM 11573 / NCIMB 13689 / SK2)).